The chain runs to 329 residues: tRNA-modifying protein YgfZ (329 aa).

Residues W32 and W190 each contribute to the folate site.

It belongs to the tRNA-modifying YgfZ family.

It is found in the cytoplasm. Its function is as follows. Folate-binding protein involved in regulating the level of ATP-DnaA and in the modification of some tRNAs. It is probably a key factor in regulatory networks that act via tRNA modification, such as initiation of chromosomal replication. This Photobacterium profundum (strain SS9) protein is tRNA-modifying protein YgfZ.